Consider the following 203-residue polypeptide: A-type ATP synthase subunit E (203 aa).

The protein belongs to the V-ATPase E subunit family. Has multiple subunits with at least A(3), B(3), C, D, E, F, H, I and proteolipid K(x).

It is found in the cell membrane. Functionally, component of the A-type ATP synthase that produces ATP from ADP in the presence of a proton gradient across the membrane. The chain is A-type ATP synthase subunit E from Desulfurococcus sp. (strain SY).